The primary structure comprises 117 residues: Cell division protein FtsB (117 aa).

Over Met-1–Trp-6 the chain is Cytoplasmic. Residues Met-7–Phe-24 traverse the membrane as a helical segment. The Periplasmic portion of the chain corresponds to Gly-25 to Pro-117. A coiled-coil region spans residues Ser-29–Ala-69.

The protein belongs to the FtsB family. In terms of assembly, part of a complex composed of FtsB, FtsL and FtsQ.

The protein localises to the cell inner membrane. Its function is as follows. Essential cell division protein. May link together the upstream cell division proteins, which are predominantly cytoplasmic, with the downstream cell division proteins, which are predominantly periplasmic. This Stenotrophomonas maltophilia (strain R551-3) protein is Cell division protein FtsB.